We begin with the raw amino-acid sequence, 667 residues long: DNA ligase (667 aa).

NAD(+)-binding positions include 32–36, 81–82, and Glu-110; these read DSEYD and SL. Lys-112 serves as the catalytic N6-AMP-lysine intermediate. NAD(+) is bound by residues Arg-133, Glu-167, Lys-283, and Lys-307. 4 residues coordinate Zn(2+): Cys-401, Cys-404, Cys-419, and Cys-424. In terms of domain architecture, BRCT spans 586–667; the sequence is EGHPDFKDKT…FVQKQNEIEG (82 aa).

This sequence belongs to the NAD-dependent DNA ligase family. LigA subfamily. The cofactor is Mg(2+). Mn(2+) is required as a cofactor.

The catalysed reaction is NAD(+) + (deoxyribonucleotide)n-3'-hydroxyl + 5'-phospho-(deoxyribonucleotide)m = (deoxyribonucleotide)n+m + AMP + beta-nicotinamide D-nucleotide.. DNA ligase that catalyzes the formation of phosphodiester linkages between 5'-phosphoryl and 3'-hydroxyl groups in double-stranded DNA using NAD as a coenzyme and as the energy source for the reaction. It is essential for DNA replication and repair of damaged DNA. The chain is DNA ligase from Staphylococcus saprophyticus subsp. saprophyticus (strain ATCC 15305 / DSM 20229 / NCIMB 8711 / NCTC 7292 / S-41).